The sequence spans 442 residues: 3-ketoacyl-CoA thiolase (442 aa).

Cysteine 105 functions as the Acyl-thioester intermediate in the catalytic mechanism. Residues histidine 398 and cysteine 428 each act as proton acceptor in the active site.

This sequence belongs to the thiolase-like superfamily. Thiolase family. Heterotetramer of two alpha chains (FadJ) and two beta chains (FadI).

It is found in the cytoplasm. The enzyme catalyses an acyl-CoA + acetyl-CoA = a 3-oxoacyl-CoA + CoA. It functions in the pathway lipid metabolism; fatty acid beta-oxidation. Catalyzes the final step of fatty acid oxidation in which acetyl-CoA is released and the CoA ester of a fatty acid two carbons shorter is formed. This chain is 3-ketoacyl-CoA thiolase, found in Aliivibrio fischeri (strain MJ11) (Vibrio fischeri).